The chain runs to 244 residues: ATP synthase subunit a (244 aa).

A run of 5 helical transmembrane segments spans residues 17–37, 75–95, 112–132, 170–190, and 221–241; these read LTNI…AILT, FLAL…LGLP, DPAI…YYGV, LYGN…LATS, and GAIQ…HKIS.

The protein belongs to the ATPase A chain family. As to quaternary structure, F-type ATPases have 2 components, CF(1) - the catalytic core - and CF(0) - the membrane proton channel. CF(1) has five subunits: alpha(3), beta(3), gamma(1), delta(1), epsilon(1). CF(0) has three main subunits: a(1), b(2) and c(9-12). The alpha and beta chains form an alternating ring which encloses part of the gamma chain. CF(1) is attached to CF(0) by a central stalk formed by the gamma and epsilon chains, while a peripheral stalk is formed by the delta and b chains. The F(1)F(0) complex interacts with SpoIIIJ and YqjG; YqgA is found in the same complex.

The protein resides in the cell membrane. In terms of biological role, key component of the proton channel; it plays a direct role in the translocation of protons across the membrane. This chain is ATP synthase subunit a, found in Bacillus subtilis (strain 168).